The sequence spans 548 residues: Multidrug efflux system permease protein Rv1217c (548 aa).

12 helical membrane-spanning segments follow: residues 39–59 (VSLP…YIAS), 99–119 (GIWK…LTVI), 148–168 (ALLL…LGLL), 178–198 (VAFG…AAVA), 210–230 (AVAF…DAGS), 253–273 (WWVL…AYRL), 313–333 (LLWT…VHGI), 359–379 (AFLA…AVSL), 410–430 (LAMA…AAGL), 450–470 (AAVQ…LFGL), 477–497 (VAWG…LAGF), and 521–541 (VPLL…AMAF).

In terms of assembly, the complex is probably composed of two ATP-binding proteins (Rv1218c) and a transmembrane protein (Rv1217c).

It is found in the cell inner membrane. Its function is as follows. Probably part of the ABC transporter complex Rv1217c-Rv1218c involved in the resistance to a wide range of structurally unrelated drugs. Probably responsible for the translocation of the substrate across the membrane. The sequence is that of Multidrug efflux system permease protein Rv1217c from Mycobacterium tuberculosis (strain ATCC 25618 / H37Rv).